The following is a 180-amino-acid chain: Large ribosomal subunit protein uL5 (180 aa).

The protein belongs to the universal ribosomal protein uL5 family. Part of the 50S ribosomal subunit; part of the 5S rRNA/L5/L18/L25 subcomplex. Contacts the 5S rRNA and the P site tRNA. Forms a bridge to the 30S subunit in the 70S ribosome.

Functionally, this is one of the proteins that bind and probably mediate the attachment of the 5S RNA into the large ribosomal subunit, where it forms part of the central protuberance. In the 70S ribosome it contacts protein S13 of the 30S subunit (bridge B1b), connecting the 2 subunits; this bridge is implicated in subunit movement. Contacts the P site tRNA; the 5S rRNA and some of its associated proteins might help stabilize positioning of ribosome-bound tRNAs. The protein is Large ribosomal subunit protein uL5 of Solibacter usitatus (strain Ellin6076).